Here is a 116-residue protein sequence, read N- to C-terminus: U16-barytoxin-Tl1a (116 aa).

The signal sequence occupies residues 1–20 (MKTIIVFLSLLVLATKFGDA). Residues 21–74 (KEGVNQKQKKEVTQNEFREEYLNEMAAMSLVQQLEAIERALFENEAGRNSRQKR) constitute a propeptide that is removed on maturation. Disulfide bonds link cysteine 75/cysteine 90, cysteine 82/cysteine 95, and cysteine 89/cysteine 110.

It belongs to the neurotoxin 14 (magi-1) family. 06 (ICK-Trit) subfamily. As to expression, expressed by the venom gland.

The protein resides in the secreted. Ion channel inhibitor. This chain is U16-barytoxin-Tl1a, found in Trittame loki (Brush-footed trapdoor spider).